Consider the following 267-residue polypeptide: Small ribosomal subunit protein uS2 (267 aa).

The interval 225–267 (LREQELEGEEQEEAAPATEEEKKELIEEAVAEGEAEETEEEEK) is disordered. The segment covering 251-267 (EEAVAEGEAEETEEEEK) has biased composition (acidic residues).

It belongs to the universal ribosomal protein uS2 family.

This chain is Small ribosomal subunit protein uS2, found in Nitratiruptor sp. (strain SB155-2).